The following is a 246-amino-acid chain: 1-(5-phosphoribosyl)-5-[(5-phosphoribosylamino)methylideneamino] imidazole-4-carboxamide isomerase (246 aa).

Asp-8 (proton acceptor) is an active-site residue. Catalysis depends on Asp-131, which acts as the Proton donor.

It belongs to the HisA/HisF family.

Its subcellular location is the cytoplasm. It catalyses the reaction 1-(5-phospho-beta-D-ribosyl)-5-[(5-phospho-beta-D-ribosylamino)methylideneamino]imidazole-4-carboxamide = 5-[(5-phospho-1-deoxy-D-ribulos-1-ylimino)methylamino]-1-(5-phospho-beta-D-ribosyl)imidazole-4-carboxamide. Its pathway is amino-acid biosynthesis; L-histidine biosynthesis; L-histidine from 5-phospho-alpha-D-ribose 1-diphosphate: step 4/9. This chain is 1-(5-phosphoribosyl)-5-[(5-phosphoribosylamino)methylideneamino] imidazole-4-carboxamide isomerase, found in Bordetella avium (strain 197N).